Reading from the N-terminus, the 125-residue chain is Large ribosomal subunit protein bL12 (125 aa).

The protein belongs to the bacterial ribosomal protein bL12 family. As to quaternary structure, homodimer. Part of the ribosomal stalk of the 50S ribosomal subunit. Forms a multimeric L10(L12)X complex, where L10 forms an elongated spine to which 2 to 4 L12 dimers bind in a sequential fashion. Binds GTP-bound translation factors.

Its function is as follows. Forms part of the ribosomal stalk which helps the ribosome interact with GTP-bound translation factors. Is thus essential for accurate translation. The protein is Large ribosomal subunit protein bL12 of Mannheimia succiniciproducens (strain KCTC 0769BP / MBEL55E).